Here is a 184-residue protein sequence, read N- to C-terminus: Probable sensory rhodopsin transducer (184 aa).

2 helical membrane-spanning segments follow: residues 14 to 34 and 52 to 72; these read TLGVGAVLVLVLATLAVVNVY and GLVSILLIVAVALLFVATIIG. The HAMP domain occupies 73 to 125; sequence RERTAAVETLAAQARQIEQGELDVDLATNRTDDVGDIYRALAVLRDSEQLDRQ.

Belongs to the methyl-accepting chemotaxis (MCP) protein family. In terms of assembly, interacts with Xop2/SRM.

It is found in the membrane. Functionally, the HtrM-Xop2/SRM complex may interact with CheB or CheR and modulate their availability to Sop1 or Sop2. The sequence is that of Probable sensory rhodopsin transducer (htrM) from Haloarcula marismortui (strain ATCC 43049 / DSM 3752 / JCM 8966 / VKM B-1809) (Halobacterium marismortui).